Here is a 142-residue protein sequence, read N- to C-terminus: HTH-type transcriptional regulator LrpA1 (142 aa).

Residues 1–72 form the HTH asnC-type domain; it reads MSTESTEERI…GQSIAMVGID (72 aa). The segment at residues 22–41 is a DNA-binding region (H-T-H motif); sequence YAAIAERADVSKPTVRKYID.

Its function is as follows. Transcription factor that regulates genes involved in amino acid metabolism. Represses the aspB3 gene, coding for an aspartate transaminase, in the presence of L-aspartate. Another target gene is the basal transcriptional regulator tfbB. Also binds its own promoter. This chain is HTH-type transcriptional regulator LrpA1 (lrpA1), found in Halobacterium salinarum (strain ATCC 29341 / DSM 671 / R1).